Consider the following 260-residue polypeptide: Thiazole synthase (260 aa).

K96 (schiff-base intermediate with DXP) is an active-site residue. Residues G157, 183 to 184, and 205 to 206 contribute to the 1-deoxy-D-xylulose 5-phosphate site; these read AG and AS.

The protein belongs to the ThiG family. In terms of assembly, homotetramer. Forms heterodimers with either ThiH or ThiS.

It localises to the cytoplasm. It catalyses the reaction [ThiS sulfur-carrier protein]-C-terminal-Gly-aminoethanethioate + 2-iminoacetate + 1-deoxy-D-xylulose 5-phosphate = [ThiS sulfur-carrier protein]-C-terminal Gly-Gly + 2-[(2R,5Z)-2-carboxy-4-methylthiazol-5(2H)-ylidene]ethyl phosphate + 2 H2O + H(+). Its pathway is cofactor biosynthesis; thiamine diphosphate biosynthesis. In terms of biological role, catalyzes the rearrangement of 1-deoxy-D-xylulose 5-phosphate (DXP) to produce the thiazole phosphate moiety of thiamine. Sulfur is provided by the thiocarboxylate moiety of the carrier protein ThiS. In vitro, sulfur can be provided by H(2)S. This is Thiazole synthase from Corynebacterium glutamicum (strain R).